The sequence spans 449 residues: Methionine aminopeptidase 2 (449 aa).

Positions 1-91 are disordered; it reads MAAQAAPELA…PRIPLTTLFP (91 aa). A compositionally biased stretch (acidic residues) spans 34–50; it reads EEAENEGDSDDDRDDEQ. Positions 61–75 are enriched in basic residues; it reads KKKKKKRPKKKKKTA. H199 serves as a coordination point for substrate. A divalent metal cation contacts are provided by D219, D230, and H299. H307 lines the substrate pocket. 2 residues coordinate a divalent metal cation: E335 and E430.

This sequence belongs to the peptidase M24A family. Methionine aminopeptidase eukaryotic type 2 subfamily. Requires Co(2+) as cofactor. Zn(2+) serves as cofactor. Mn(2+) is required as a cofactor. The cofactor is Fe(2+).

Its subcellular location is the cytoplasm. It catalyses the reaction Release of N-terminal amino acids, preferentially methionine, from peptides and arylamides.. Its function is as follows. Cotranslationally removes the N-terminal methionine from nascent proteins. The N-terminal methionine is often cleaved when the second residue in the primary sequence is small and uncharged (Met-Ala-, Cys, Gly, Pro, Ser, Thr, or Val). In Arthroderma benhamiae (strain ATCC MYA-4681 / CBS 112371) (Trichophyton mentagrophytes), this protein is Methionine aminopeptidase 2.